Here is a 305-residue protein sequence, read N- to C-terminus: GMP synthase [glutamine-hydrolyzing] subunit B (305 aa).

The region spanning 2–185 is the GMPS ATP-PPase domain; that stretch reads VNVDEFIEEA…LDLEEIISER (184 aa). Position 29–35 (29–35) interacts with ATP; sequence SGGVDSS.

Heterodimer composed of a glutamine amidotransferase subunit (A) and a GMP-binding subunit (B).

The enzyme catalyses XMP + L-glutamine + ATP + H2O = GMP + L-glutamate + AMP + diphosphate + 2 H(+). It participates in purine metabolism; GMP biosynthesis; GMP from XMP (L-Gln route): step 1/1. Functionally, catalyzes the synthesis of GMP from XMP. This Haloarcula marismortui (strain ATCC 43049 / DSM 3752 / JCM 8966 / VKM B-1809) (Halobacterium marismortui) protein is GMP synthase [glutamine-hydrolyzing] subunit B.